Reading from the N-terminus, the 217-residue chain is uncharacterized protein (217 aa).

Residues 2-216 form the ABC transporter domain; sequence LCVKNVSLRL…AQWSENYNKL (215 aa). 34-41 contacts ATP; that stretch reads GPSGCGKS.

Belongs to the ABC transporter superfamily.

In terms of biological role, probably part of a binding-protein-dependent transport system YnjCD. Probably responsible for energy coupling to the transport system. This is an uncharacterized protein from Escherichia coli (strain K12).